A 474-amino-acid chain; its full sequence is GTPase Der (474 aa).

EngA-type G domains lie at 3–167 and 204–379; these read LTIA…GSER and IRIA…RVWN. GTP is bound by residues 9-16, 56-60, 119-122, 210-217, 257-261, and 322-325; these read GRPNVGKS, DTAGL, NKSE, GRPNTGKS, and NKWD. In terms of domain architecture, KH-like spans 380 to 464; sequence RRISTAKLNQ…PVRLSLRASD (85 aa).

This sequence belongs to the TRAFAC class TrmE-Era-EngA-EngB-Septin-like GTPase superfamily. EngA (Der) GTPase family. In terms of assembly, associates with the 50S ribosomal subunit.

Functionally, GTPase that plays an essential role in the late steps of ribosome biogenesis. The polypeptide is GTPase Der (Bartonella tribocorum (strain CIP 105476 / IBS 506)).